We begin with the raw amino-acid sequence, 198 residues long: Probable chorismate pyruvate-lyase (198 aa).

Positions 73, 111, and 172 each coordinate substrate.

It belongs to the UbiC family.

It localises to the cytoplasm. The enzyme catalyses chorismate = 4-hydroxybenzoate + pyruvate. The protein operates within cofactor biosynthesis; ubiquinone biosynthesis. Removes the pyruvyl group from chorismate, with concomitant aromatization of the ring, to provide 4-hydroxybenzoate (4HB) for the ubiquinone pathway. This Burkholderia orbicola (strain AU 1054) protein is Probable chorismate pyruvate-lyase.